The sequence spans 441 residues: uncharacterized protein (441 aa).

Residue 78–85 (GPRQAGKT) coordinates ATP.

This is an uncharacterized protein from Mycobacterium bovis (strain ATCC BAA-935 / AF2122/97).